A 633-amino-acid chain; its full sequence is Pescadillo homolog (633 aa).

The BRCT domain maps to 321–414; that stretch reads RLRTLFKGLK…QLLPTNKYFL (94 aa). 2 disordered regions span residues 450-470 and 490-567; these read HAQS…DTVE and KKYG…LQAR. Phosphoserine is present on residues Ser453 and Ser457. Composition is skewed to acidic residues over residues 454–470 and 498–526; these read EDES…DTVE and VNED…EELD. A compositionally biased stretch (basic and acidic residues) spans 527–538; it reads EKEKRLLEEKQK. Over residues 545–554 the composition is skewed to basic residues; it reads KVHKVNKRQV. A compositionally biased stretch (basic and acidic residues) spans 555-564; that stretch reads HKAEVDEHRL. A coiled-coil region spans residues 593 to 626; it reads LLRKKRRTIETDAKEAKKLAKREARKAAAAAAAA.

The protein belongs to the pescadillo family.

The protein localises to the nucleus. It localises to the nucleolus. The protein resides in the nucleoplasm. In terms of biological role, required for maturation of ribosomal RNAs and formation of the large ribosomal subunit. This is Pescadillo homolog from Drosophila virilis (Fruit fly).